A 287-amino-acid chain; its full sequence is rRNA adenine N-6-methyltransferase (287 aa).

Residues 1-13 (MKKKNHKYRGKKL) are compositionally biased toward basic residues. Residues 1–21 (MKKKNHKYRGKKLNRGESPNF) are disordered. S-adenosyl-L-methionine is bound by residues histidine 25, methionine 27, glycine 52, glutamate 73, aspartate 98, and asparagine 114.

This sequence belongs to the class I-like SAM-binding methyltransferase superfamily. rRNA adenine N(6)-methyltransferase family. Homodimer.

Involved in erythromycin resistance. In Bacillus anthracis, this protein is rRNA adenine N-6-methyltransferase (ermJ).